A 169-amino-acid chain; its full sequence is Nucleoside diphosphate kinase 3 (169 aa).

Positions 29, 105, 111, 122, 129, and 132 each coordinate ADP. Catalysis depends on histidine 135, which acts as the Pros-phosphohistidine intermediate.

Belongs to the NDK family. Homohexamer. Interacts (via its N-terminal region) with KAT5; this interaction enables recruitment of NME3 at DNA damage sites where it plays a role in the repair of DNA. Found in association with several ciliary nephronophthisis proteins, including NEK8, CEP164, ANKS6. Mg(2+) is required as a cofactor.

Its subcellular location is the mitochondrion outer membrane. It is found in the cytoplasm. The protein resides in the cytoskeleton. The protein localises to the cilium basal body. It catalyses the reaction a 2'-deoxyribonucleoside 5'-diphosphate + ATP = a 2'-deoxyribonucleoside 5'-triphosphate + ADP. The catalysed reaction is a ribonucleoside 5'-diphosphate + ATP = a ribonucleoside 5'-triphosphate + ADP. Functionally, catalyzes the phosphorylation of ribonucleosides and deoxyribonucleoside diphosphates, other than ATP, into the corresponding triphosphates with ATP as the major phosphate donor. The ATP gamma phosphate is transferred to the nucleoside diphosphate beta phosphate via a ping-pong mechanism, using a phosphorylated active-site intermediate. Through the catalyzed exchange of gamma-phosphate between di- and triphosphonucleosides participates in regulation of intracellular nucleotide homeostasis. Inhibits granulocyte differentiation. May be required for ciliary function during renal development. In terms of biological role, independently of its kinase activity, facilitates mitochondrial tethering prior to membrane fusion through its direct membrane-binding and hexamerization. Implicated in repair of both single- and double-stranded breaks in DNA through its association with the ribonucleotide reductase complex (RNR complex) via its interaction with the histone acetyltransferase KAT5, this interaction enables recruitment of NME3 at DNA damage sites where it plays a role in the repair of DNA, independently of its kinase activity. The chain is Nucleoside diphosphate kinase 3 from Homo sapiens (Human).